The primary structure comprises 527 residues: TnpB-like protein R854 (527 aa).

The segment covering 21-36 has biased composition (basic residues); it reads GSKTKKKVFVKKKPPA. The tract at residues 21-50 is disordered; the sequence is GSKTKKKVFVKKKPPAKKPPDKKPLKKTTK. Residues Cys481, Cys484, Cys498, and Cys501 each coordinate Zn(2+).

This sequence in the central section; belongs to the transposase 2 family. The protein in the C-terminal section; belongs to the transposase 35 family.

This Acanthamoeba polyphaga mimivirus (APMV) protein is TnpB-like protein R854.